The chain runs to 198 residues: MHGVNDPPLFIKDIKAGLKNLNVVFIVLEIGRVTKTKDGHEVRSCKVADRTGSITISVWDEIGGLIQTGDIIRLTRGYASMWKGCLTLYTGRGGELQKIGEFCMVYSEVPNFSEPNPDYRGQQNRGVQNEQKDKLSTNTFGPVGNGDQTGPESRGYHLPYGRSNGPGPISPQLPGTPSSQTVRTTISNARDPRRAFKR.

A DNA-binding region (OB) is located at residues 26–89 (IVLEIGRVTK…SMWKGCLTLY (64 aa)). Residues 114 to 198 (EPNPDYRGQQ…ARDPRRAFKR (85 aa)) form a disordered region. 2 stretches are compositionally biased toward polar residues: residues 136 to 151 (STNTFGPVGNGDQTGP) and 173 to 188 (LPGTPSSQTVRTTISN).

It belongs to the SOSS-B family. SOSS-B2 subfamily. In terms of assembly, component of the SOSS complex, composed of SOSS-B (SOSS-B1/NABP2 or SOSS-B2/NABP1), SOSS-A/INTS3 and SOSS-C/INIP. SOSS complexes containing SOSS-B1/NABP2 are more abundant than complexes containing SOSS-B2/NABP1. Ubiquitous with high expression in the thymus.

The protein localises to the nucleus. Functionally, component of the SOSS complex, a multiprotein complex that functions downstream of the MRN complex to promote DNA repair and G2/M checkpoint. In the SOSS complex, acts as a sensor of single-stranded DNA that binds to single-stranded DNA, in particular to polypyrimidines. The SOSS complex associates with DNA lesions and influences diverse endpoints in the cellular DNA damage response including cell-cycle checkpoint activation, recombinational repair and maintenance of genomic stability. Required for efficient homologous recombination-dependent repair of double-strand breaks (DSBs) and ATM-dependent signaling pathways. The polypeptide is SOSS complex subunit B2 (Nabp1) (Mus musculus (Mouse)).